A 71-amino-acid chain; its full sequence is Sodium channel neurotoxin MeuNaTxalpha-12 (71 aa).

Positions 1 to 6 (MTGVES) are cleaved as a signal peptide. Residues 8–70 (RDAYIAQGNN…VPIRIQGKCQ (63 aa)) enclose the LCN-type CS-alpha/beta domain. Cystine bridges form between C18/C69, C22/C42, C28/C52, and C32/C54. A propeptide (removed by a carboxypeptidase) is located at residue R71.

Belongs to the long (4 C-C) scorpion toxin superfamily. Sodium channel inhibitor family. Alpha subfamily. Expressed by the venom gland.

It localises to the secreted. Functionally, alpha toxins bind voltage-independently at site-3 of sodium channels (Nav) and inhibit the inactivation of the activated channels, thereby blocking neuronal transmission. In Mesobuthus eupeus (Lesser Asian scorpion), this protein is Sodium channel neurotoxin MeuNaTxalpha-12.